Here is a 914-residue protein sequence, read N- to C-terminus: Eukaryotic initiation factor 4F subunit p130 (914 aa).

Pro residues predominate over residues 1 to 12; sequence MTDQRGPPPPHP. Disordered stretches follow at residues 1 to 84, 128 to 205, 240 to 351, and 457 to 535; these read MTDQ…YNNR, PPYT…NEAV, ERKK…VNKS, and IARN…LVPS. The span at 26-44 shows a compositional bias: polar residues; sequence NQYSGANNSQPNNHYNENL. Over residues 59–73 the composition is skewed to low complexity; it reads KNGKYGTNKYNNRNN. S74 carries the phosphoserine modification. Low complexity predominate over residues 145–155; the sequence is PKTTKIEITTK. The span at 156–195 shows a compositional bias: basic and acidic residues; the sequence is TGERLNLKKFHEEKKASKGEEKNDGVEQKSKSGTPFEKEA. Phosphothreonine is present on T196. The segment at 201–315 is interaction with PAB1; the sequence is ANEAVKDTLT…TGSVTKSVTF (115 aa). Basic and acidic residues predominate over residues 240 to 263; the sequence is ERKKNGLISETEKKQETSNHDNTD. Composition is skewed to polar residues over residues 298-325 and 339-348; these read SVKT…SSSQ and ISDTTGGKTV. Phosphothreonine is present on T301. The span at 496 to 529 shows a compositional bias: basic and acidic residues; that stretch reads RMGDDRRSNRGYTSRKDREKAAEKAEEQAPKEEI. Phosphoserine is present on S503. An MIF4G domain is found at 567-810; it reads ERKMKSLLNK…IDVKELREIK (244 aa). The tract at residues 833 to 914 is disordered; the sequence is QLRQKKNSQR…ALMNNDGDSD (82 aa). Low complexity predominate over residues 841-867; that stretch reads QRSNSRFNNHNQSNSNRYSSNRRNMQN. Residues 868 to 886 show a composition bias toward polar residues; the sequence is TQRDSFASTKTGSFRNNQR. At S913 the chain carries Phosphoserine.

Belongs to the eukaryotic initiation factor 4G family. In terms of assembly, component of the eIF4F complex, which composition varies with external and internal environmental conditions. It is composed of at least eIF4A (TIF1/TIF2), eIF4E (TIF45) and eIF4G (TIF4631 or TIF4632). Interacts with PAT1 in a RNA-dependent manner.

The protein localises to the cytoplasm. Component of the eIF4F complex, which interacts with the mRNA cap structure and serves as an initial point of assembly for the translation apparatus. Stimulates translation by interaction with polyadenylate-binding protein PAB1, bringing the 5'- and 3'-ends of the mRNA in proximity. The formation of this circular mRNP structure appears to be critical for the synergistic effects of the cap and the poly(A) tail in facilitating translation initiation, recycling of ribosomes, and mRNA stability. TIF4632 is probably essential when TIF4631 is missing. The protein is Eukaryotic initiation factor 4F subunit p130 of Saccharomyces cerevisiae (strain ATCC 204508 / S288c) (Baker's yeast).